A 414-amino-acid chain; its full sequence is MADQSSHQKYEFKKKLESLRGKKGRGTELISLYIPPDKQISDVVSQLRNEHSQASNIKSKLTKTNVQGAIDSIMSRLRYGTVPENGIVYFTGAVDVGANKTNMETTIVEPPQPIITYRYHCDSSFFLTPLEDMLKEAKTYGLLVLDRREATVGLLTGKQIEAFRNLTSTVPGKQRKGGQSAHRFQQLRLIAIHDFYKRIGDAASEVFLAVEQKDFEGVLIGGPSPTKEEFEAGNFFHHEIEKKVLDLFDVAYTDESGLSELVNAASERLEDLDLMVEKKLMQQFFRELVSDSGKATYGEDNVRENLIIGAVDILLISEDLRAVRETVKCTSCDYEQKTSREFKPGDSSSPTGNCPKCGSYLEITEKVDVVDQLSEICDQMGTRVEFISTDFEEGSQLLKAFGGVVAILRFNTGI.

This sequence belongs to the eukaryotic release factor 1 family. Heterodimer of two subunits, one of which binds GTP.

The protein resides in the cytoplasm. Directs the termination of nascent peptide synthesis (translation) in response to the termination codons UAA, UAG and UGA. The sequence is that of Peptide chain release factor subunit 1 from Methanococcoides burtonii (strain DSM 6242 / NBRC 107633 / OCM 468 / ACE-M).